A 127-amino-acid polypeptide reads, in one-letter code: Small ribosomal subunit protein uS11 (127 aa).

This sequence belongs to the universal ribosomal protein uS11 family. Part of the 30S ribosomal subunit. Interacts with proteins S7 and S18. Binds to IF-3.

Its function is as follows. Located on the platform of the 30S subunit, it bridges several disparate RNA helices of the 16S rRNA. Forms part of the Shine-Dalgarno cleft in the 70S ribosome. The sequence is that of Small ribosomal subunit protein uS11 from Streptococcus mutans serotype c (strain ATCC 700610 / UA159).